A 335-amino-acid chain; its full sequence is Acetyl-coenzyme A carboxylase carboxyl transferase subunit alpha (335 aa).

The region spanning 48–308 is the CoA carboxyltransferase C-terminal domain; sequence VLESKVDALR…KSLLVEELRM (261 aa).

It belongs to the AccA family. As to quaternary structure, acetyl-CoA carboxylase is a heterohexamer composed of biotin carboxyl carrier protein (AccB), biotin carboxylase (AccC) and two subunits each of ACCase subunit alpha (AccA) and ACCase subunit beta (AccD).

It is found in the cytoplasm. The enzyme catalyses N(6)-carboxybiotinyl-L-lysyl-[protein] + acetyl-CoA = N(6)-biotinyl-L-lysyl-[protein] + malonyl-CoA. It functions in the pathway lipid metabolism; malonyl-CoA biosynthesis; malonyl-CoA from acetyl-CoA: step 1/1. Its function is as follows. Component of the acetyl coenzyme A carboxylase (ACC) complex. First, biotin carboxylase catalyzes the carboxylation of biotin on its carrier protein (BCCP) and then the CO(2) group is transferred by the carboxyltransferase to acetyl-CoA to form malonyl-CoA. The sequence is that of Acetyl-coenzyme A carboxylase carboxyl transferase subunit alpha from Chlorobium phaeobacteroides (strain BS1).